Consider the following 120-residue polypeptide: Large ribosomal subunit protein uL18 (120 aa).

Over residues 1–10 the composition is skewed to basic and acidic residues; sequence MKRTRTESVQ. The interval 1–24 is disordered; the sequence is MKRTRTESVQRRHSRIRRKVEGTP.

The protein belongs to the universal ribosomal protein uL18 family. As to quaternary structure, part of the 50S ribosomal subunit; part of the 5S rRNA/L5/L18/L25 subcomplex. Contacts the 5S and 23S rRNAs.

Functionally, this is one of the proteins that bind and probably mediate the attachment of the 5S RNA into the large ribosomal subunit, where it forms part of the central protuberance. This Gloeothece citriformis (strain PCC 7424) (Cyanothece sp. (strain PCC 7424)) protein is Large ribosomal subunit protein uL18.